Reading from the N-terminus, the 555-residue chain is MITVKVKNLTKKYGDFKALDKVSFEAKKGEILGIVGKSGAGKSTLIRILRGSLDYDEGEVEILGRKDNFKEITAIHLQRNFALWAEPVINNIIRKLYAIRNNADEQLPLEEEWEEYEKTAIEILKLVGLEHKKDAFANILSGGEKQRLILGRQIAKIYEKGEGVLLLDEPATMACPASKQKLLDVIKNIRDKLGITVIITSHLPEIHRYLCDRLILLENGKVKMDGDVEEVLNEFLKKMKPPYKRTPNIKDNAIIQVRNVSKRYYVVHGGETLNLRNVSFDVKEGEILSIIGPSGVGKTVIMRLMAGLELPDEGKIIVDGIDITNYGWERIELRKRIGIMHQEFSLPYYQTVENLLKYRLGLKGEKAIAHAKAKAEELGLSPKIVDALYQLIDVPESERISKLQKMGLTEDIIYKLFPPVVESFEPEEILEALDLGKDILKKKVIELSGGQKVRVAMALQLITKPKILFLDEPFGDLDPITLRDVANYLKIINERFGTTIVLVSHCVEFIKEISDRAILLDENRLVMEGNPEEVCEEFIRRSNARFMKEELKCKN.

2 ABC transporter domains span residues 4–244 (VKVK…PPYK) and 255–547 (IQVR…ARFM). Residues 36-43 (GKSGAGKS) and 292-299 (GPSGVGKT) contribute to the ATP site.

Belongs to the ABC transporter superfamily.

This is an uncharacterized protein from Methanocaldococcus jannaschii (strain ATCC 43067 / DSM 2661 / JAL-1 / JCM 10045 / NBRC 100440) (Methanococcus jannaschii).